The primary structure comprises 289 residues: Urease accessory protein UreD (289 aa).

It belongs to the UreD family. As to quaternary structure, ureD, UreF and UreG form a complex that acts as a GTP-hydrolysis-dependent molecular chaperone, activating the urease apoprotein by helping to assemble the nickel containing metallocenter of UreC. The UreE protein probably delivers the nickel.

Its subcellular location is the cytoplasm. Functionally, required for maturation of urease via the functional incorporation of the urease nickel metallocenter. This Magnetococcus marinus (strain ATCC BAA-1437 / JCM 17883 / MC-1) protein is Urease accessory protein UreD.